Here is a 297-residue protein sequence, read N- to C-terminus: Large ribosomal subunit protein uL18 (297 aa).

Lys-164 participates in a covalent cross-link: Glycyl lysine isopeptide (Lys-Gly) (interchain with G-Cter in ubiquitin). Ser-167, Ser-176, and Ser-235 each carry phosphoserine.

The protein belongs to the universal ribosomal protein uL18 family. As to quaternary structure, component of the large ribosomal subunit (LSU). Mature yeast ribosomes consist of a small (40S) and a large (60S) subunit. The 40S small subunit contains 1 molecule of ribosomal RNA (18S rRNA) and 33 different proteins (encoded by 57 genes). The large 60S subunit contains 3 rRNA molecules (25S, 5.8S and 5S rRNA) and 46 different proteins (encoded by 81 genes). Component of a hexameric 5S RNP precursor complex, composed of 5S RNA, RRS1, RPF2, RPL5, RPL11A/RPL11B and SYO1; this complex acts as a precursor for ribosome assembly. RPL5/uL18 forms a heterotrimeric complex with SYO1 and RPL11A/RPL11B/uL5. Interaction of this complex with KAP104 allows the nuclear import of the heterotrimer.

Its subcellular location is the cytoplasm. It is found in the nucleus. In terms of biological role, component of the ribosome, a large ribonucleoprotein complex responsible for the synthesis of proteins in the cell. The small ribosomal subunit (SSU) binds messenger RNAs (mRNAs) and translates the encoded message by selecting cognate aminoacyl-transfer RNA (tRNA) molecules. The large subunit (LSU) contains the ribosomal catalytic site termed the peptidyl transferase center (PTC), which catalyzes the formation of peptide bonds, thereby polymerizing the amino acids delivered by tRNAs into a polypeptide chain. The nascent polypeptides leave the ribosome through a tunnel in the LSU and interact with protein factors that function in enzymatic processing, targeting, and the membrane insertion of nascent chains at the exit of the ribosomal tunnel. The polypeptide is Large ribosomal subunit protein uL18 (Saccharomyces cerevisiae (strain ATCC 204508 / S288c) (Baker's yeast)).